Here is a 422-residue protein sequence, read N- to C-terminus: Serine hydroxymethyltransferase (422 aa).

(6S)-5,6,7,8-tetrahydrofolate-binding positions include Leu-113 and 117-119 (GHL). An N6-(pyridoxal phosphate)lysine modification is found at Lys-222.

It belongs to the SHMT family. In terms of assembly, homodimer. It depends on pyridoxal 5'-phosphate as a cofactor.

Its subcellular location is the cytoplasm. It catalyses the reaction (6R)-5,10-methylene-5,6,7,8-tetrahydrofolate + glycine + H2O = (6S)-5,6,7,8-tetrahydrofolate + L-serine. The protein operates within one-carbon metabolism; tetrahydrofolate interconversion. It participates in amino-acid biosynthesis; glycine biosynthesis; glycine from L-serine: step 1/1. In terms of biological role, catalyzes the reversible interconversion of serine and glycine with tetrahydrofolate (THF) serving as the one-carbon carrier. This reaction serves as the major source of one-carbon groups required for the biosynthesis of purines, thymidylate, methionine, and other important biomolecules. Also exhibits THF-independent aldolase activity toward beta-hydroxyamino acids, producing glycine and aldehydes, via a retro-aldol mechanism. This is Serine hydroxymethyltransferase from Amoebophilus asiaticus (strain 5a2).